A 196-amino-acid polypeptide reads, in one-letter code: FMN-dependent NADH:quinone oxidoreductase (196 aa).

Position 10 (Ser10) interacts with FMN.

It belongs to the azoreductase type 1 family. As to quaternary structure, homodimer. The cofactor is FMN.

It carries out the reaction 2 a quinone + NADH + H(+) = 2 a 1,4-benzosemiquinone + NAD(+). The catalysed reaction is N,N-dimethyl-1,4-phenylenediamine + anthranilate + 2 NAD(+) = 2-(4-dimethylaminophenyl)diazenylbenzoate + 2 NADH + 2 H(+). In terms of biological role, quinone reductase that provides resistance to thiol-specific stress caused by electrophilic quinones. Also exhibits azoreductase activity. Catalyzes the reductive cleavage of the azo bond in aromatic azo compounds to the corresponding amines. This Cereibacter sphaeroides (strain KD131 / KCTC 12085) (Rhodobacter sphaeroides) protein is FMN-dependent NADH:quinone oxidoreductase.